We begin with the raw amino-acid sequence, 476 residues long: ATP synthase subunit beta (476 aa).

ATP is bound at residue 158–165 (GGAGVGKT).

Belongs to the ATPase alpha/beta chains family. F-type ATPases have 2 components, CF(1) - the catalytic core - and CF(0) - the membrane proton channel. CF(1) has five subunits: alpha(3), beta(3), gamma(1), delta(1), epsilon(1). CF(0) has three main subunits: a(1), b(2) and c(9-12). The alpha and beta chains form an alternating ring which encloses part of the gamma chain. CF(1) is attached to CF(0) by a central stalk formed by the gamma and epsilon chains, while a peripheral stalk is formed by the delta and b chains.

It is found in the cell inner membrane. The enzyme catalyses ATP + H2O + 4 H(+)(in) = ADP + phosphate + 5 H(+)(out). Its function is as follows. Produces ATP from ADP in the presence of a proton gradient across the membrane. The catalytic sites are hosted primarily by the beta subunits. The chain is ATP synthase subunit beta from Paracidovorax citrulli (strain AAC00-1) (Acidovorax citrulli).